Reading from the N-terminus, the 442-residue chain is Trigger factor (442 aa).

One can recognise a PPIase FKBP-type domain in the interval 175–258 (GDFISISLHV…VNAVIEVSIP (84 aa)).

It belongs to the FKBP-type PPIase family. Tig subfamily.

It is found in the cytoplasm. The catalysed reaction is [protein]-peptidylproline (omega=180) = [protein]-peptidylproline (omega=0). Involved in protein export. Acts as a chaperone by maintaining the newly synthesized protein in an open conformation. Functions as a peptidyl-prolyl cis-trans isomerase. The chain is Trigger factor (tig) from Chlamydia pneumoniae (Chlamydophila pneumoniae).